Here is a 107-residue protein sequence, read N- to C-terminus: Small ribosomal subunit protein bS16 (107 aa).

Residues 85-107 form a disordered region; that stretch reads REARNNPEKAVPRKERKAAEAGK.

Belongs to the bacterial ribosomal protein bS16 family.

This chain is Small ribosomal subunit protein bS16, found in Rhodopseudomonas palustris (strain BisB5).